The chain runs to 154 residues: D-aminoacyl-tRNA deacylase (154 aa).

The Gly-cisPro motif, important for rejection of L-amino acids motif lies at Gly-137–Pro-138.

The protein belongs to the DTD family. Homodimer.

The protein localises to the cytoplasm. It catalyses the reaction glycyl-tRNA(Ala) + H2O = tRNA(Ala) + glycine + H(+). The enzyme catalyses a D-aminoacyl-tRNA + H2O = a tRNA + a D-alpha-amino acid + H(+). An aminoacyl-tRNA editing enzyme that deacylates mischarged D-aminoacyl-tRNAs. Also deacylates mischarged glycyl-tRNA(Ala), protecting cells against glycine mischarging by AlaRS. Acts via tRNA-based rather than protein-based catalysis; rejects L-amino acids rather than detecting D-amino acids in the active site. By recycling D-aminoacyl-tRNA to D-amino acids and free tRNA molecules, this enzyme counteracts the toxicity associated with the formation of D-aminoacyl-tRNA entities in vivo and helps enforce protein L-homochirality. The protein is D-aminoacyl-tRNA deacylase of Thermomicrobium roseum (strain ATCC 27502 / DSM 5159 / P-2).